The following is a 195-amino-acid chain: Protein GrpE (195 aa).

The span at 1–20 (MSSKEQKTPDEQVLDQKEAA) shows a compositional bias: basic and acidic residues. The interval 1 to 40 (MSSKEQKTPDEQVLDQKEAAKGQQADAAPETADVADPRDE) is disordered.

The protein belongs to the GrpE family. As to quaternary structure, homodimer.

The protein localises to the cytoplasm. Participates actively in the response to hyperosmotic and heat shock by preventing the aggregation of stress-denatured proteins, in association with DnaK and GrpE. It is the nucleotide exchange factor for DnaK and may function as a thermosensor. Unfolded proteins bind initially to DnaJ; upon interaction with the DnaJ-bound protein, DnaK hydrolyzes its bound ATP, resulting in the formation of a stable complex. GrpE releases ADP from DnaK; ATP binding to DnaK triggers the release of the substrate protein, thus completing the reaction cycle. Several rounds of ATP-dependent interactions between DnaJ, DnaK and GrpE are required for fully efficient folding. In Pectobacterium atrosepticum (strain SCRI 1043 / ATCC BAA-672) (Erwinia carotovora subsp. atroseptica), this protein is Protein GrpE.